The chain runs to 57 residues: MSRLYAIILIALVLNVIMTIMPDSKVEAVSCEDCPEHCSTQKARAKCDNDKCVCESV.

Residues Met1–Ala28 form the signal peptide. 3 disulfides stabilise this stretch: Cys31–Cys47, Cys34–Cys52, and Cys38–Cys54.

Belongs to the short scorpion toxin superfamily. Potassium channel inhibitor family. Alpha-KTx 08 subfamily. As to expression, expressed by the venom gland.

It is found in the secreted. Its function is as follows. Selectively inhibits voltage-gated potassium channels Kv1.2/KCNA2 (IC(50)=183 nM). The sequence is that of Potassium channel toxin alpha-KTx 8.5 from Odontobuthus doriae (Yellow Iranian scorpion).